A 253-amino-acid polypeptide reads, in one-letter code: MLLTIDVGNTNTVLGVFDGDQLANSWRVRTDPRATADELGWLYRGLLGDHPIGGVSVCSTVPAALREIRRMVSRTFPAMPTVVVEPGTRTGVPILIDNPKEAGADRIMNTLAAHHLYGGPAIVVDFGTATNIDVVSARGEFLGGAFAPGIEVALDALASRAAQLRNVELTTPRSVIGKSTVEALQSGMIYGVVGQVDALVRRIRAELGTPATTIATGGLAPLVIKESETLDNHEPHLTLIGLRLVFEKNTEPR.

6-13 (DVGNTNTV) is an ATP binding site. 103-106 (GADR) serves as a coordination point for substrate. Residue Asp-105 is the Proton acceptor of the active site. Asp-125 lines the K(+) pocket. Thr-128 serves as a coordination point for ATP. Thr-180 provides a ligand contact to substrate.

It belongs to the type III pantothenate kinase family. In terms of assembly, homodimer. NH4(+) is required as a cofactor. Requires K(+) as cofactor.

Its subcellular location is the cytoplasm. It catalyses the reaction (R)-pantothenate + ATP = (R)-4'-phosphopantothenate + ADP + H(+). The protein operates within cofactor biosynthesis; coenzyme A biosynthesis; CoA from (R)-pantothenate: step 1/5. Its function is as follows. Catalyzes the phosphorylation of pantothenate (Pan), the first step in CoA biosynthesis. The sequence is that of Type III pantothenate kinase from Parafrankia sp. (strain EAN1pec).